The sequence spans 226 residues: PKHD-type hydroxylase PLES_48951 (226 aa).

The Fe2OG dioxygenase domain maps to 78 to 178 (KVFPPLFNCY…RYASFFWTQS (101 aa)). Positions 96, 98, and 159 each coordinate Fe cation. R169 is a binding site for 2-oxoglutarate.

It depends on Fe(2+) as a cofactor. L-ascorbate is required as a cofactor.

The protein is PKHD-type hydroxylase PLES_48951 of Pseudomonas aeruginosa (strain LESB58).